The primary structure comprises 174 residues: Gamma-crystallin C (174 aa).

Beta/gamma crystallin 'Greek key' domains follow at residues 2-40 (GKIT…RVDS) and 41-83 (GCWM…RLIP). Cys23 carries the S-methylcysteine modification. Residues 84–87 (HAGS) are connecting peptide. 2 Beta/gamma crystallin 'Greek key' domains span residues 88 to 128 (HRMR…QVLE) and 129 to 171 (GCWV…RRVV).

It belongs to the beta/gamma-crystallin family.

Functionally, crystallins are the dominant structural components of the vertebrate eye lens. The polypeptide is Gamma-crystallin C (Crygc) (Mus musculus (Mouse)).